The primary structure comprises 256 residues: Thiazole synthase (256 aa).

The active-site Schiff-base intermediate with DXP is K98. 1-deoxy-D-xylulose 5-phosphate is bound by residues G159, 185-186 (AG), and 207-208 (NT).

Belongs to the ThiG family. As to quaternary structure, homotetramer. Forms heterodimers with either ThiH or ThiS.

Its subcellular location is the cytoplasm. It carries out the reaction [ThiS sulfur-carrier protein]-C-terminal-Gly-aminoethanethioate + 2-iminoacetate + 1-deoxy-D-xylulose 5-phosphate = [ThiS sulfur-carrier protein]-C-terminal Gly-Gly + 2-[(2R,5Z)-2-carboxy-4-methylthiazol-5(2H)-ylidene]ethyl phosphate + 2 H2O + H(+). The protein operates within cofactor biosynthesis; thiamine diphosphate biosynthesis. Its function is as follows. Catalyzes the rearrangement of 1-deoxy-D-xylulose 5-phosphate (DXP) to produce the thiazole phosphate moiety of thiamine. Sulfur is provided by the thiocarboxylate moiety of the carrier protein ThiS. In vitro, sulfur can be provided by H(2)S. This is Thiazole synthase (thiG) from Bacillus subtilis (strain 168).